Consider the following 427-residue polypeptide: Enolase (427 aa).

Residue Q163 participates in (2R)-2-phosphoglycerate binding. E205 functions as the Proton donor in the catalytic mechanism. Residues D242, E288, and D315 each coordinate Mg(2+). The (2R)-2-phosphoglycerate site is built by K340, R369, S370, and K391. K340 (proton acceptor) is an active-site residue.

It belongs to the enolase family. Requires Mg(2+) as cofactor.

The protein localises to the cytoplasm. Its subcellular location is the secreted. The protein resides in the cell surface. It catalyses the reaction (2R)-2-phosphoglycerate = phosphoenolpyruvate + H2O. It participates in carbohydrate degradation; glycolysis; pyruvate from D-glyceraldehyde 3-phosphate: step 4/5. In terms of biological role, catalyzes the reversible conversion of 2-phosphoglycerate (2-PG) into phosphoenolpyruvate (PEP). It is essential for the degradation of carbohydrates via glycolysis. The protein is Enolase of Amoebophilus asiaticus (strain 5a2).